The chain runs to 59 residues: Large ribosomal subunit protein uL30 (59 aa).

The protein belongs to the universal ribosomal protein uL30 family. In terms of assembly, part of the 50S ribosomal subunit.

The polypeptide is Large ribosomal subunit protein uL30 (Alteromonas mediterranea (strain DSM 17117 / CIP 110805 / LMG 28347 / Deep ecotype)).